Consider the following 208-residue polypeptide: Glutathione S-transferase 2 (208 aa).

In terms of domain architecture, GST N-terminal spans 1-78; it reads MSYKLTYFSI…HLARKYNLNG (78 aa). Glutathione-binding positions include Tyr7, Lys42, 49-50, and 62-63; these read QL and QS. Positions 80 to 200 constitute a GST C-terminal domain; the sequence is NEMETTYIDM…YCEKRDAAKV (121 aa).

This sequence belongs to the GST superfamily. Pi family. As to quaternary structure, homodimer. Hypodermis, wall of the seminal receptacle and spermatozoa of adult worms.

It carries out the reaction RX + glutathione = an S-substituted glutathione + a halide anion + H(+). Appears to play a central role in the parasite detoxification system. This Onchocerca volvulus protein is Glutathione S-transferase 2 (GST2).